The sequence spans 139 residues: GSK3B-interacting protein (139 aa).

A disordered region spans residues 1–22 (METDCNPMELSSMSGFEEGSEL). Residues 41–45 (VNDVL) form a required for PRKAR2A interaction; contributes to a protective effect against H(2)O(2)-induced apoptosis region. The interval 115-139 (SPAYREAFGNALLQRLEALKRDGQS) is interaction with GSK3B and acts as a GSK3B inhibitor.

This sequence belongs to the GSKIP family. In terms of assembly, forms a complex composed of PRKAR2A or PRKAR2B, GSK3B and GSKIP through GSKIP interaction; facilitates PKA-induced phosphorylation of GSK3B leading to GSK3B inactivation; recruits DNM1L through GSK3B for PKA-mediated phosphorylation of DNM1L; promotes beta-catenin degradation through GSK3B-induced phosphorylation of beta-catenin; stabilizes beta-catenin and enhances Wnt-induced signaling through PKA-induced phosphorylation of beta-catenin. Interacts with GSK3B; induces GSK3B-mediated phosphorylation of GSKIP and inhibits GSK3B kinase activity. Post-translationally, phosphorylated by GSK3B. In terms of tissue distribution, detected in heart, brain, placenta, liver, skeletal muscle, kidney, testis, lung and pancreas.

Its subcellular location is the cytoplasm. It is found in the nucleus. Its function is as follows. A-kinase anchoring protein for GSK3B and PKA that regulates or facilitates their kinase activity towards their targets. The ternary complex enhances Wnt-induced signaling by facilitating the GSK3B- and PKA-induced phosphorylation of beta-catenin leading to beta-catenin degradation and stabilization respectively. Upon cAMP activation, the ternary complex contributes to neuroprotection against oxidative stress-induced apoptosis by facilitating the PKA-induced phosphorylation of DML1 and PKA-induced inactivation of GSK3B. During neurite outgrowth promotes neuron proliferation; while increases beta-catenin-induced transcriptional activity through GSK3B kinase activity inhibition, reduces N-cadherin level to promote cell cycle progression. The protein is GSK3B-interacting protein of Homo sapiens (Human).